The primary structure comprises 394 residues: THAP domain-containing protein 5 (394 aa).

Residues 1–84 form a THAP-type zinc finger; that stretch reads MPRYCAAICC…LKQTAIPTIF (84 aa). The segment at 86–109 is disordered; the sequence is LPEDNQEKDPSKKKSQKKKLKSEK. An HCFC1-binding motif (HBM) motif is present at residues 320 to 323; sequence EHSY. The stretch at 347 to 381 forms a coiled coil; it reads LELQEQQTLGRLKSLEALIRQLKQENWLSEENVKI.

Interacts with HTRA2; under apoptotic conditions. Interacts with ABRAXAS2. In terms of processing, cleaved by HTRA2 during apoptosis.

Its subcellular location is the nucleus. Its function is as follows. Has sequence-specific DNA-binding activity and can function as transcriptional repressor (in vitro). May be a regulator of cell cycle: THAP5 overexpression in human cell lines causes cell cycle arrest at G2/M phase. The chain is THAP domain-containing protein 5 (THAP5) from Bos taurus (Bovine).